Reading from the N-terminus, the 300-residue chain is MAAAAGDADDEPRSGHSSSEGECAVAPEPLTDAEGLFSFADFGSALGGGGAGLSGRASGGAQSPLRYLHVLWQQDAEPRDELRCKIPAGRLRRAARPHRRLGPTGKEVHALKRLRDSANANDVETVQQLLEDGADPCAADDKGRTALHFASCNGNDQIVQLLLDHGADPNQRDGLGNTPLHLAACTNHVPVITTLLRGGARVDALDRAGRTPLHLAKSKLNILQEGHAQCLEAVRLEVKQIIHMLREYLERLGQHEQRERLDDLCTRLQMTSTKEQVDEVTDLLASFTSLSLQMQSMEKR.

Residues 1–27 (MAAAAGDADDEPRSGHSSSEGECAVAP) are disordered. Alanine 2 carries the post-translational modification N-acetylalanine. 2 positions are modified to phosphoserine: serine 58 and serine 63. The Nuclear localization signal (NLS) signature appears at 99–117 (RRLGPTGKEVHALKRLRDS). 4 ANK repeats span residues 109–138 (HALKRLRDSANANDVETVQQLLEDGADPCA), 142–171 (KGRTALHFASCNGNDQIVQLLLDHGADPNQ), 175–204 (LGNTPLHLAACTNHVPVITTLLRGGARVDA), and 208–244 (AGRTPLHLAKSKLNILQEGHAQCLEAVRLEVKQIIHM). Residues 141 to 241 (DKGRTALHFA…EAVRLEVKQI (101 aa)) form an LYN-binding region. Positions 283–293 (LLASFTSLSLQ) match the Nuclear export signal (NES) motif.

In terms of assembly, interacts (via ankyrin repeat region) with LYN (via SH3-domain) in an activation-independent status of LYN. Forms a multiprotein complex with LYN and HCLS1. Interacts with TSN2, VAV1, DBNL and LASP1.

The protein resides in the nucleus. The protein localises to the cytoplasm. Its subcellular location is the midbody. Its function is as follows. Plays an important role in regulating intracellular signaling events associated with erythroid terminal differentiation. The sequence is that of Ankyrin repeat domain-containing protein 54 (ANKRD54) from Homo sapiens (Human).